The primary structure comprises 959 residues: Glycine dehydrogenase (decarboxylating) (959 aa).

K708 bears the N6-(pyridoxal phosphate)lysine mark.

The protein belongs to the GcvP family. The glycine cleavage system is composed of four proteins: P, T, L and H. The cofactor is pyridoxal 5'-phosphate.

The catalysed reaction is N(6)-[(R)-lipoyl]-L-lysyl-[glycine-cleavage complex H protein] + glycine + H(+) = N(6)-[(R)-S(8)-aminomethyldihydrolipoyl]-L-lysyl-[glycine-cleavage complex H protein] + CO2. The glycine cleavage system catalyzes the degradation of glycine. The P protein binds the alpha-amino group of glycine through its pyridoxal phosphate cofactor; CO(2) is released and the remaining methylamine moiety is then transferred to the lipoamide cofactor of the H protein. This is Glycine dehydrogenase (decarboxylating) from Serratia proteamaculans (strain 568).